The sequence spans 316 residues: Olfactory receptor 10H3 (316 aa).

The Extracellular segment spans residues 1–25 (MPGQNYRTISEFILSGFSAFPQQLL). The helical transmembrane segment at 26 to 46 (PVLFLLYLLMFLFTLLGNLLI) threads the bilayer. Over 47–54 (MATVWIER) the chain is Cytoplasmic. A helical membrane pass occupies residues 55-75 (RLHTPMYLFLCALSISEILFT). Residues 76 to 99 (VAITPRMLADLLFTHRSITFVACA) are Extracellular-facing. Cysteines 98 and 190 form a disulfide. Residues 100–120 (IQMFFSFMFGFTHSFLLMVMG) form a helical membrane-spanning segment. The Cytoplasmic segment spans residues 121-139 (YDHYVTICHPLHYNMLMSP). The chain crosses the membrane as a helical span at residues 140-160 (RGCAHLVAWTWAGGSVMGMMV). Residues 161–197 (TMMVFHLTFCGSNVIHHFLCHVLSLLKLACGSKTSSV) are Extracellular-facing. Residues 198-218 (IMGVMLVCVTALIGCLFLIIL) traverse the membrane as a helical segment. Residues 219–238 (SFVFIVAAILRIPSAEGRHK) are Cytoplasmic-facing. Residues 239–259 (TFSTCVSHLTVVVMHYSFASL) traverse the membrane as a helical segment. At 260 to 272 (IYLKPKGLHSMYS) the chain is on the extracellular side. The helical transmembrane segment at 273 to 293 (DALMATTYTVFTPFLSPIIFS) threads the bilayer. The Cytoplasmic segment spans residues 294-316 (LRNKELKNAINKNFCRRFCPLSS).

It belongs to the G-protein coupled receptor 1 family.

It localises to the cell membrane. Odorant receptor. In Homo sapiens (Human), this protein is Olfactory receptor 10H3 (OR10H3).